A 393-amino-acid polypeptide reads, in one-letter code: MRKIMINFPLASSTWDEKELNAIQRIIDSNMFTMGESVKQYEKDFAEYFGSKYSVMVSSGSTANLLMIAALFFTKKPKFKRGDEVIVPAVSWSTTYFPLQQYGLNVRFVDIDKKTLNIDLDKLKSAITEKTKAILAVNLLGNPNDFDAITKITEGKDIFILEDNCESMGARLNGKQAGTYGLMGTFSSFFSHHIATMEGGCVITDDEELYHILLCIRAHGWTRNLPEFNHITGQKSIDPFEESFKFVLPGYNVRPLEMSGAIGIEQLKKLPSFIEMRRKNATIFKELFSSHPYIDIQQETGESSWFGFALILKESSPITRAELVKKLIEAGIECRPIVTGNFLKNKEVLKFFDYTIAGEVTDAEYIDKHGLFVGNHQIDLSEQIKNLFNILKK.

30 to 33 (NMFT) is a GDP-4-dehydro-alpha-D-rhamnose binding site. Residues 53 to 73 (YSVMVSSGSTANLLMIAALFF) traverse the membrane as a helical segment. Pyridoxal 5'-phosphate is bound by residues 60 to 61 (GS), Trp-92, Glu-166, and Ser-187. Catalysis depends on His-192, which acts as the Proton donor/acceptor. Residue His-219 coordinates L-glutamate. Arg-223 is a GDP-4-dehydro-alpha-D-rhamnose binding site. Asn-252 contacts pyridoxal 5'-phosphate. Arg-254 contributes to the L-glutamate binding site. Residue Glu-333 coordinates GDP-4-dehydro-alpha-D-rhamnose.

The protein belongs to the DegT/DnrJ/EryC1 family. Homodimer. The cofactor is pyridoxal 5'-phosphate.

It is found in the cell membrane. The enzyme catalyses GDP-4-dehydro-alpha-D-rhamnose + L-glutamate = GDP-4-dehydro-3,6-dideoxy-alpha-D-mannose + 2-oxoglutarate + NH4(+). It participates in nucleotide-sugar metabolism; GDP-L-colitose biosynthesis. Its function is as follows. Involved in the biosynthesis of L-colitose, a 3,6-dideoxyhexose present in the O-antigen region of lipopolysaccharides (LPS), where it serves as an antigenic determinant and is vital for bacterial defense and survival. Catalyzes the removal of the C3'-hydroxyl group from GDP-4-keto-6-deoxy-D-mannose via a combined transamination-deoxygenation reaction. The catalysis is initiated by a transamination step in which pyridoxal 5'-phosphate (PLP) is converted to pyridoxamine 5'-phosphate (PMP) in the presence of L-glutamate. This coenzyme then forms a Schiff base with GDP-4-keto-6-deoxy-D-mannose and the resulting adduct undergoes a PMP-mediated beta-dehydration reaction to give a sugar enamine intermediate, which after tautomerization and hydrolysis to release ammonia yields GDP-4-keto-3,6-dideoxy-D-mannose as a product. The chain is GDP-4-keto-6-deoxy-D-mannose 3-dehydratase from Yersinia pseudotuberculosis.